Reading from the N-terminus, the 478-residue chain is Succinyl-CoA:acetate/propanoyl-CoA:succinate CoA transferase (478 aa).

The N-terminal 30 residues, 1-30 (MYQLAFLRCRYASPIVREARRAFHASRKCQ), are a transit peptide targeting the mitochondrion. CoA is bound at residue 256-260 (GIGAI). Residue E279 is the 5-glutamyl coenzyme A thioester intermediate of the active site. 3 residues coordinate CoA: I354, G377, and K404.

This sequence belongs to the acetyl-CoA hydrolase/transferase family.

Its subcellular location is the mitochondrion. It catalyses the reaction succinyl-CoA + acetate = succinate + acetyl-CoA. The catalysed reaction is propanoyl-CoA + succinate = propanoate + succinyl-CoA. In terms of biological role, transferase involved in anaerobic fumarate-respiration in the mitochondria. Catalyzes the transfer of the CoA moiety of acetyl-CoA or propionyl-CoA to succinate, thereby forming acetate and propionate, respectively. Acetate and propionate are the two major metabolic end products in the anaerobic mitochondrial metabolism of F.hepatica. Also displays CoA transferase activities from acetyl-CoA to propionate, acetate and butyrate. The polypeptide is Succinyl-CoA:acetate/propanoyl-CoA:succinate CoA transferase (Fasciola hepatica (Liver fluke)).